Consider the following 256-residue polypeptide: 1-(5-phosphoribosyl)-5-[(5-phosphoribosylamino)methylideneamino] imidazole-4-carboxamide isomerase (256 aa).

The Proton acceptor role is filled by Asp-8. Catalysis depends on Asp-130, which acts as the Proton donor.

Belongs to the HisA/HisF family.

Its subcellular location is the cytoplasm. It carries out the reaction 1-(5-phospho-beta-D-ribosyl)-5-[(5-phospho-beta-D-ribosylamino)methylideneamino]imidazole-4-carboxamide = 5-[(5-phospho-1-deoxy-D-ribulos-1-ylimino)methylamino]-1-(5-phospho-beta-D-ribosyl)imidazole-4-carboxamide. The protein operates within amino-acid biosynthesis; L-histidine biosynthesis; L-histidine from 5-phospho-alpha-D-ribose 1-diphosphate: step 4/9. The chain is 1-(5-phosphoribosyl)-5-[(5-phosphoribosylamino)methylideneamino] imidazole-4-carboxamide isomerase from Pelodictyon phaeoclathratiforme (strain DSM 5477 / BU-1).